Reading from the N-terminus, the 200-residue chain is uncharacterized protein (200 aa).

This is an uncharacterized protein from Ostreid herpesvirus 1 (isolate France) (OsHV-1).